A 598-amino-acid chain; its full sequence is Kinesin-like protein klp-3 (598 aa).

Coiled coils occupy residues 19 to 66 (EVEL…FIQG) and 89 to 118 (GNLS…LETD). The disordered stretch occupies residues 133–155 (ALSRDSSCSVPRSVSPQPTGDVI). Polar residues predominate over residues 136-150 (RDSSCSVPRSVSPQP). The stretch at 170-248 (HWKKLQRCAE…LVELNGNIRV (79 aa)) forms a coiled coil. The Kinesin motor domain maps to 245 to 565 (NIRVFYRIRP…VNFAEKIGQV (321 aa)). 328-335 (GHTGSGKT) is a binding site for ATP. The tract at residues 569–598 (SGTMKREPTRRSMTGISSGQRREIPASPRK) is disordered.

The protein belongs to the TRAFAC class myosin-kinesin ATPase superfamily. Kinesin family.

Its subcellular location is the cytoplasm. It is found in the cytoskeleton. In Caenorhabditis elegans, this protein is Kinesin-like protein klp-3 (klp-3).